Consider the following 589-residue polypeptide: Serine/threonine-protein phosphatase 2A 65 kDa regulatory subunit A alpha isoform (589 aa).

Ala-2 carries the N-acetylalanine modification. HEAT repeat units lie at residues 8–46 (DSLYPIAVLIDELRNEDVQLRLNSIKKLSTIALALGVER), 47–84 (TRSELLPFLTDTIYDEDEVLLALAEQLGTFTTLVGGPE), 85–123 (YVHCLLPPLESLATVEETVVRDKAVESLRAISHEHSPSD), 124–161 (LEAHFVPLVKRLAGGDWFTSRTSACGLFSVCYPRVSSA), 162–200 (VKAELRQYFRNLCSDDTPMVRRAAASKLGEFAKVLELDN), 201–239 (VKSEIIPMFSNLASDEQDSVRLLAVEACVNIAQLLPQED), 240–278 (LEALVMPTLRQAAEDKSWRVRYMVADKFTELQKAVGPEI), 279–321 (TKTD…RENV), 322–360 (IMSQILPCIKELVSDANQHVKSALASVIMGLSPILGKDN), 361–399 (TIEHLLPLFLAQLKDECPEVRLNIISNLDCVNEVIGIRQ), 400–438 (LSQSLLPAIVELAEDAKWRVRLAIIEYMPLLAGQLGVEF), 439–477 (FDEKLNSLCMAWLVDHVYAIREAATSNLKKLVEKFGKEW), 478–516 (AHATIIPKVLAMSGDPNYLHRMTTLFCINVLSEVCGQDI), 517–555 (TTKHMLPTVLRMAGDPVANVRFNVAKSLQKIGPILDNST), and 556–589 (LQSEVKPILEKLTQDQDVDVKYFAQEALTVLSLA). Positions 8–399 (DSLYPIAVLI…CVNEVIGIRQ (392 aa)) are PP2A subunit B binding. The tract at residues 47–321 (TRSELLPFLT…NLSADCRENV (275 aa)) is polyoma small and medium T antigens Binding. Positions 85–239 (YVHCLLPPLE…NIAQLLPQED (155 aa)) are SV40 small T antigen binding. N6-acetyllysine is present on Lys-280. Positions 400 to 589 (LSQSLLPAIV…QEALTVLSLA (190 aa)) are PP2A subunit C binding.

Belongs to the phosphatase 2A regulatory subunit A family. In terms of assembly, PP2A consists of a common heterodimeric core enzyme, composed of PPP2CA a 36 kDa catalytic subunit (subunit C) and PPP2R1A a 65 kDa constant regulatory subunit (PR65 or subunit A), that associates with a variety of regulatory subunits. Proteins that associate with the core dimer include three families of regulatory subunits B (the R2/B/PR55/B55, R3/B''/PR72/PR130/PR59 and R5/B'/B56 families), the 48 kDa variable regulatory subunit, viral proteins, and cell signaling molecules. Found in a complex with at least ARL2, PPP2CB, PPP2R1A, PPP2R2A, PPP2R5E and TBCD. Interacts with the PP2A C catalytic subunit PPP2CA. Interacts with the PP2A B subunit PPP2R2A. Interacts with the PP2A B subunit PPP2R5D. Interacts with FOXO1; the interaction dephosphorylates FOXO1 on AKT-mediated phosphorylation sites. Interacts with IPO9. Interacts with TP53 and SGO1. Interacts with PLA2G16; this interaction might decrease PP2A activity. Interacts with CTTNBP2NL. Interacts with GNA12; the interaction promotes protein phosphatase 2A activation causing dephosphorylation of MAPT. Interacts with CIP2A; this interaction stabilizes CIP2A. Interacts with PABIR1/FAM122A. Interacts with ADCY8; antagonizes interaction between ADCY8 and calmodulin. Interacts with CRTC3 (when phosphorylated at 'Ser-391'). Interacts with SPRY2. Part of the core of STRIPAK complexes composed of PP2A catalytic and scaffolding subunits, the striatins (PP2A regulatory subunits), the striatin-associated proteins MOB4, STRIP1 and STRIP2, PDCD10 and members of the STE20 kinases, such as STK24 and STK26. Component of the Integrator-PP2A (INTAC) complex, composed of the Integrator core complex and protein phosphatase 2A subunits PPP2CA and PPP2R1A. (Microbial infection) Interacts with JC virus small t antigen; this interaction inhibits PPP2R1A activity.

The protein localises to the cytoplasm. It localises to the nucleus. Its subcellular location is the chromosome. It is found in the centromere. The protein resides in the lateral cell membrane. The protein localises to the cell projection. It localises to the dendrite. Its function is as follows. The PR65 subunit of protein phosphatase 2A serves as a scaffolding molecule to coordinate the assembly of the catalytic subunit and a variable regulatory B subunit. Upon interaction with GNA12 promotes dephosphorylation of microtubule associated protein TAU/MAPT. Required for proper chromosome segregation and for centromeric localization of SGO1 in mitosis. Together with RACK1 adapter, mediates dephosphorylation of AKT1 at 'Ser-473', preventing AKT1 activation and AKT-mTOR signaling pathway. Dephosphorylation of AKT1 is essential for regulatory T-cells (Treg) homeostasis and stability. Part of the striatin-interacting phosphatase and kinase (STRIPAK) complexes. STRIPAK complexes have critical roles in protein (de)phosphorylation and are regulators of multiple signaling pathways including Hippo, MAPK, nuclear receptor and cytoskeleton remodeling. Different types of STRIPAK complexes are involved in a variety of biological processes such as cell growth, differentiation, apoptosis, metabolism and immune regulation. Key mediator of a quality checkpoint during transcription elongation as part of the Integrator-PP2A (INTAC) complex. The INTAC complex drives premature transcription termination of transcripts that are unfavorably configured for transcriptional elongation: within the INTAC complex, acts as a scaffolding subunit for PPP2CA, which catalyzes dephosphorylation of the C-terminal domain (CTD) of Pol II subunit POLR2A/RPB1 and SUPT5H/SPT5, thereby preventing transcriptional elongation. Regulates the recruitment of the SKA complex to kinetochores. This is Serine/threonine-protein phosphatase 2A 65 kDa regulatory subunit A alpha isoform from Homo sapiens (Human).